The primary structure comprises 215 residues: MASNSGHRDTRLLHGARTRSYGSLVQTTYSPAQIRKLEHQVQPGDTLQGLALRYGVSMEQIKRANRLYTNDSIFLKKSLYIPATAGQSDLSDDQNSQEGSETEGSPVKQPEKGEKQKSRHHVVQKDEMSPVDFMSRLDTNIRVSKRAAVKKLREGESFATEESTPGGAPGYQGNRTPSRQNSPQTQQRSLLGPVPLTITTRASTIRDHEDEIFKL.

Residues 37 to 81 (LEHQVQPGDTLQGLALRYGVSMEQIKRANRLYTNDSIFLKKSLYI) enclose the LysM domain. Composition is skewed to polar residues over residues 86–103 (GQSD…SETE) and 173–189 (GNRT…QQRS). Disordered regions lie at residues 86–133 (GQSD…PVDF) and 148–203 (AVKK…TRAS).

The protein is LysM and putative peptidoglycan-binding domain-containing protein 1 (lysmd1) of Xenopus laevis (African clawed frog).